The chain runs to 90 residues: Large ribosomal subunit protein uL23c (90 aa).

This sequence belongs to the universal ribosomal protein uL23 family. In terms of assembly, part of the 50S ribosomal subunit.

Its subcellular location is the plastid. It localises to the chloroplast. Binds to 23S rRNA. This is Large ribosomal subunit protein uL23c (rpl23) from Psilotum nudum (Whisk fern).